A 162-amino-acid chain; its full sequence is Ribosome maturation factor RimP (162 aa).

This sequence belongs to the RimP family.

Its subcellular location is the cytoplasm. Required for maturation of 30S ribosomal subunits. In Cupriavidus metallidurans (strain ATCC 43123 / DSM 2839 / NBRC 102507 / CH34) (Ralstonia metallidurans), this protein is Ribosome maturation factor RimP.